The chain runs to 179 residues: Inner membrane-spanning protein YciB (179 aa).

5 helical membrane-spanning segments follow: residues 22 to 42 (IYAA…YSWV), 50 to 70 (MALI…FFHN), 76 to 96 (WKVT…QWVM), 121 to 141 (LAWA…AFWL), and 149 to 169 (FKVF…GIYI).

Belongs to the YciB family.

The protein resides in the cell inner membrane. In terms of biological role, plays a role in cell envelope biogenesis, maintenance of cell envelope integrity and membrane homeostasis. The sequence is that of Inner membrane-spanning protein YciB from Klebsiella pneumoniae (strain 342).